The sequence spans 223 residues: Glutathione S-transferase 4 (223 aa).

Position 2 is a blocked amino end (Ala) (Ala-2). The region spanning 4-85 (PAVKVYGWAI…HVLRKHKPEL (82 aa)) is the GST N-terminal domain. Glutathione is bound by residues Ser-14, 43-44 (HR), 56-57 (KV), and 69-70 (ES). The region spanning 90-223 (RLEQTAMVDV…VGAGAPKEQE (134 aa)) is the GST C-terminal domain.

This sequence belongs to the GST superfamily. Phi family. As to quaternary structure, homodimer or heterodimer of GST-I and GST-IV (=GST-II). Seedling roots.

It carries out the reaction RX + glutathione = an S-substituted glutathione + a halide anion + H(+). Conjugation of reduced glutathione to a wide number of exogenous and endogenous hydrophobic electrophiles. Involved in the detoxification of certain herbicides. Most active with substrates possessing a chloroacetamide structure. Trans-cinnamic acid and 1-chloro-2,4-dinitrobenzene are not effective substrates. May play an important role in the benoxacor-mediated protection of maize from metolachlor injury. This is Glutathione S-transferase 4 (GST4) from Zea mays (Maize).